Reading from the N-terminus, the 89-residue chain is Acylphosphatase (89 aa).

In terms of domain architecture, Acylphosphatase-like spans 4–89 (SYIAHISGRV…WQEHHFFSIG (86 aa)). Residues R19 and N37 contribute to the active site.

The protein belongs to the acylphosphatase family.

It carries out the reaction an acyl phosphate + H2O = a carboxylate + phosphate + H(+). This is Acylphosphatase (acyP) from Colwellia psychrerythraea (strain 34H / ATCC BAA-681) (Vibrio psychroerythus).